The following is a 275-amino-acid chain: Dermonecrotic toxin SpeSicTox-betaIIA2i (275 aa).

Residue histidine 5 is part of the active site. Mg(2+) contacts are provided by glutamate 25 and aspartate 27. Histidine 41 serves as the catalytic Nucleophile. 2 cysteine pairs are disulfide-bonded: cysteine 45–cysteine 51 and cysteine 47–cysteine 190. Aspartate 85 is a Mg(2+) binding site.

Belongs to the arthropod phospholipase D family. Class II subfamily. It depends on Mg(2+) as a cofactor. In terms of tissue distribution, expressed by the venom gland.

The protein localises to the secreted. The enzyme catalyses an N-(acyl)-sphingosylphosphocholine = an N-(acyl)-sphingosyl-1,3-cyclic phosphate + choline. It catalyses the reaction an N-(acyl)-sphingosylphosphoethanolamine = an N-(acyl)-sphingosyl-1,3-cyclic phosphate + ethanolamine. It carries out the reaction a 1-acyl-sn-glycero-3-phosphocholine = a 1-acyl-sn-glycero-2,3-cyclic phosphate + choline. The catalysed reaction is a 1-acyl-sn-glycero-3-phosphoethanolamine = a 1-acyl-sn-glycero-2,3-cyclic phosphate + ethanolamine. Dermonecrotic toxins cleave the phosphodiester linkage between the phosphate and headgroup of certain phospholipids (sphingolipid and lysolipid substrates), forming an alcohol (often choline) and a cyclic phosphate. This toxin acts on sphingomyelin (SM). It may also act on ceramide phosphoethanolamine (CPE), lysophosphatidylcholine (LPC) and lysophosphatidylethanolamine (LPE), but not on lysophosphatidylserine (LPS), and lysophosphatidylglycerol (LPG). It acts by transphosphatidylation, releasing exclusively cyclic phosphate products as second products. Induces dermonecrosis, hemolysis, increased vascular permeability, edema, inflammatory response, and platelet aggregation. The chain is Dermonecrotic toxin SpeSicTox-betaIIA2i from Sicarius peruensis (Six-eyed sand spider).